A 654-amino-acid chain; its full sequence is MPRPVLSVTAFCHRLGKRESKRSFMGNSSNSWVLPREEAQGWMGQAVQGGTRTSRSHASFPKLELGLGHRPSPTREPPTCSICLERLREPISLDCGHDFCIRCFSTHRIPGCELPCCPECRKICKQRKGLRSLGERMKLLPQRPLPPALQETCAVRAERLLLVRINASGGLILRMGAINRCLKHPLARDTPVCLLAVLGEQHSGKSFLLDHLLSGLPSLESGDSGRPRAEGSLPGIRWGANGLTRGIWMWSHPFLLGKEGKKVAVFLVDTGDVMSPELSKETRVKLCALTMMLSSYQILNTSQELKDTDLGYLEMFVHVAEVMGKHYGMVPIQHLDLLVRDSSHHNKSGQGHVGDILQKLSGKYPKVQELLLGKRARCYLLPAPERQWVNKDQASPRGNTEDDFSHHFRAYILDVLSTAPQHAKSRCQGYWSEGRAVARGDRRLLTGQQLAQEIKNLSGWMGKTGPSFNSPDEMAAQLHDLRKVEAAKKEFEEYVRQQDIATKRIFSALRVLPDTMRNLLSTQKDAILARHGVALLCKEREQTLEALEAELQAEAKAFMDSYTMRFCGHLAAVGGAVGAGLMGLAGGVVGAGMAAAALAAEAGMVAAGAAVGATGAAVVGGGVGAGLAATVGCMEKEEDERVQGGDREPLLQEE.

Residues 80–121 (CSICLERLREPISLDCGHDFCIRCFSTHRIPGCELPCCPECR) form an RING-type zinc finger. Positions 154–654 (AVRAERLLLV…GDREPLLQEE (501 aa)) are interaction with ZBTB16. The region spanning 189–420 (DTPVCLLAVL…YILDVLSTAP (232 aa)) is the GB1/RHD3-type G domain. Residue 340-341 (RD) participates in GTP binding. The next 2 membrane-spanning stretches (helical) occupy residues 570 to 590 (LAAVGGAVGAGLMGLAGGVVG) and 603 to 623 (GMVAAGAAVGATGAAVVGGGV).

This sequence belongs to the TRAFAC class dynamin-like GTPase superfamily. GB1/RHD3 GTPase family. GB1 subfamily. In terms of assembly, self-associates. Interacts with SP1 in an oxidative stress-regulated manner. Interacts with SIGMAR1 in an oxidative stress-regulated manner. Interacts with ZBTB16 (via C2H2-type zinc finger domains 1 and 2). In terms of processing, auto-ubiquitinated. As to expression, expressed in most of the brain areas, including cortex, striatum, hippocampus, thalamus, and cerebellum (at protein level). Expressed in lateral amygdaloid nucleus, and ventromedial hypothalamus. Also expressed strongly in the marginal zone of brain vesicles, optic stalk, and cartilage primordium.

It localises to the membrane. The protein resides in the cytoplasm. The protein localises to the nucleus. It is found in the nuclear body. Its subcellular location is the nucleoplasm. It localises to the endosome. The protein resides in the cytoplasmic vesicle. The protein localises to the secretory vesicle. It is found in the synaptic vesicle. Its subcellular location is the postsynaptic density. It localises to the perikaryon. The protein resides in the cell projection. The protein localises to the neuron projection. It carries out the reaction S-ubiquitinyl-[E2 ubiquitin-conjugating enzyme]-L-cysteine + [acceptor protein]-L-lysine = [E2 ubiquitin-conjugating enzyme]-L-cysteine + N(6)-ubiquitinyl-[acceptor protein]-L-lysine.. It functions in the pathway protein modification; protein ubiquitination. Its function is as follows. E3 ubiquitin-protein ligase that plays an important role in neuronal differentiation, including neurogenesis and gliogenesis, during brain development. During embryonic development initiates neuronal differentiation by inducing cell cycle arrest at the G0/G1 phase through up-regulation of cell-cycle regulatory proteins. Plays a role not only in the fetal period during the development of the nervous system, but also in the adult brain, where it is involved in the maintenance of neural functions and protection of the nervous tissue cells from oxidative stress-induced damage. Exhibits GTPase and E3 ubiquitin-protein ligase activities. Regulates dendritic spine density and synaptic neurotransmission; its ability to hydrolyze GTP is involved in the maintenance of dendritic spine density. The protein is RING finger protein 112 (Rnf112) of Mus musculus (Mouse).